The primary structure comprises 124 residues: Large ribosomal subunit protein bL12 (124 aa).

Belongs to the bacterial ribosomal protein bL12 family. As to quaternary structure, homodimer. Part of the ribosomal stalk of the 50S ribosomal subunit. Forms a multimeric L10(L12)X complex, where L10 forms an elongated spine to which 2 to 4 L12 dimers bind in a sequential fashion. Binds GTP-bound translation factors.

Its function is as follows. Forms part of the ribosomal stalk which helps the ribosome interact with GTP-bound translation factors. Is thus essential for accurate translation. The sequence is that of Large ribosomal subunit protein bL12 from Ralstonia pickettii (strain 12J).